Here is a 249-residue protein sequence, read N- to C-terminus: Putative nicotinamide mononucleotide adenylyltransferase (249 aa).

Residues Ser-40 and Phe-41 each coordinate NAD(+). His-48 provides a ligand contact to ATP. Thr-97, Gly-129, Asp-131, Arg-165, and Asn-206 together coordinate NAD(+). 214 to 217 (TRAR) contacts ATP.

It belongs to the eukaryotic NMN adenylyltransferase family. POF1 subfamily.

The protein localises to the cytoplasm. It is found in the nucleus. The catalysed reaction is beta-nicotinamide D-ribonucleotide + ATP + H(+) = diphosphate + NAD(+). It participates in cofactor biosynthesis; NAD(+) biosynthesis; NAD(+) from nicotinamide D-ribonucleotide: step 1/1. Catalyzes the formation of NAD(+) from nicotinamide mononucleotide (NMN) and ATP. Involved in the salvage pathway for NAD(+) biosynthesis via NMN. This chain is Putative nicotinamide mononucleotide adenylyltransferase, found in Schizosaccharomyces pombe (strain 972 / ATCC 24843) (Fission yeast).